The primary structure comprises 499 residues: Glycerol kinase (499 aa).

Thr12 is an ADP binding site. ATP-binding residues include Thr12, Thr13, and Ser14. Thr12 is a binding site for sn-glycerol 3-phosphate. ADP is bound at residue Arg16. The sn-glycerol 3-phosphate site is built by Arg82, Glu83, Tyr134, and Asp245. Glycerol-binding residues include Arg82, Glu83, Tyr134, Asp245, and Gln246. Residues Thr267 and Gly311 each contribute to the ADP site. Residues Thr267, Gly311, Gln315, and Gly412 each contribute to the ATP site. ADP-binding residues include Gly412 and Asn416.

Belongs to the FGGY kinase family.

The catalysed reaction is glycerol + ATP = sn-glycerol 3-phosphate + ADP + H(+). It functions in the pathway polyol metabolism; glycerol degradation via glycerol kinase pathway; sn-glycerol 3-phosphate from glycerol: step 1/1. With respect to regulation, inhibited by fructose 1,6-bisphosphate (FBP). Key enzyme in the regulation of glycerol uptake and metabolism. Catalyzes the phosphorylation of glycerol to yield sn-glycerol 3-phosphate. This Acidiphilium cryptum (strain JF-5) protein is Glycerol kinase.